The following is a 273-amino-acid chain: Formamidopyrimidine-DNA glycosylase (273 aa).

Pro-2 functions as the Schiff-base intermediate with DNA in the catalytic mechanism. Glu-3 (proton donor) is an active-site residue. Lys-58 (proton donor; for beta-elimination activity) is an active-site residue. His-92, Arg-111, and Arg-153 together coordinate DNA. The FPG-type zinc finger occupies 238 to 272 (RVYGREGQKCFNCSSTILKTKNSGRSTFYCKTCQY). The active-site Proton donor; for delta-elimination activity is Arg-262.

It belongs to the FPG family. Monomer. The cofactor is Zn(2+).

The catalysed reaction is Hydrolysis of DNA containing ring-opened 7-methylguanine residues, releasing 2,6-diamino-4-hydroxy-5-(N-methyl)formamidopyrimidine.. The enzyme catalyses 2'-deoxyribonucleotide-(2'-deoxyribose 5'-phosphate)-2'-deoxyribonucleotide-DNA = a 3'-end 2'-deoxyribonucleotide-(2,3-dehydro-2,3-deoxyribose 5'-phosphate)-DNA + a 5'-end 5'-phospho-2'-deoxyribonucleoside-DNA + H(+). In terms of biological role, involved in base excision repair of DNA damaged by oxidation or by mutagenic agents. Acts as a DNA glycosylase that recognizes and removes damaged bases. Has a preference for oxidized purines, such as 7,8-dihydro-8-oxoguanine (8-oxoG). Has AP (apurinic/apyrimidinic) lyase activity and introduces nicks in the DNA strand. Cleaves the DNA backbone by beta-delta elimination to generate a single-strand break at the site of the removed base with both 3'- and 5'-phosphates. The protein is Formamidopyrimidine-DNA glycosylase of Rickettsia canadensis (strain McKiel).